Reading from the N-terminus, the 286-residue chain is 4-diphosphocytidyl-2-C-methyl-D-erythritol kinase (286 aa).

The active site involves lysine 13. 101 to 111 is a binding site for ATP; it reads PQGAGLGGGSS. Residue aspartate 143 is part of the active site.

Belongs to the GHMP kinase family. IspE subfamily.

It catalyses the reaction 4-CDP-2-C-methyl-D-erythritol + ATP = 4-CDP-2-C-methyl-D-erythritol 2-phosphate + ADP + H(+). The protein operates within isoprenoid biosynthesis; isopentenyl diphosphate biosynthesis via DXP pathway; isopentenyl diphosphate from 1-deoxy-D-xylulose 5-phosphate: step 3/6. Functionally, catalyzes the phosphorylation of the position 2 hydroxy group of 4-diphosphocytidyl-2C-methyl-D-erythritol. This chain is 4-diphosphocytidyl-2-C-methyl-D-erythritol kinase, found in Idiomarina loihiensis (strain ATCC BAA-735 / DSM 15497 / L2-TR).